Reading from the N-terminus, the 499-residue chain is Diacylglycerol kinase 1 (499 aa).

Residues 41 to 194 (APCCPVVVFI…IDSWHIIMRM (154 aa)) form the DAGKc domain. The disordered stretch occupies residues 442-479 (PCKSKSVNDPSSPMCCSNHDDDERNSLEDEDEWEEGRK). The span at 446 to 456 (KSVNDPSSPMC) shows a compositional bias: polar residues. A compositionally biased stretch (basic and acidic residues) spans 459–468 (NHDDDERNSL).

Belongs to the eukaryotic diacylglycerol kinase family. As to quaternary structure, monomer. As to expression, highly expressed in roots.

The catalysed reaction is a 1,2-diacyl-sn-glycerol + ATP = a 1,2-diacyl-sn-glycero-3-phosphate + ADP + H(+). Its function is as follows. Phosphorylates the second messenger diacylglycerol (DAG) to generate phosphatidic acid (PA), another important signaling molecule. PA is required for plant development and responses to abiotic stress. May play a role in disease resistance responses to pathogen attack. Modulates root architecture by regulating the ratio of DAG and PA, which have opposite effect on the promotion or suppression of lateral roots vs seminal roots. Suppresses lateral root number, but promotes seminal root and crown root thickness. This Oryza sativa subsp. japonica (Rice) protein is Diacylglycerol kinase 1.